The chain runs to 282 residues: 2-dehydro-3-deoxyphosphooctonate aldolase (282 aa).

The protein belongs to the KdsA family.

It localises to the cytoplasm. The catalysed reaction is D-arabinose 5-phosphate + phosphoenolpyruvate + H2O = 3-deoxy-alpha-D-manno-2-octulosonate-8-phosphate + phosphate. It functions in the pathway carbohydrate biosynthesis; 3-deoxy-D-manno-octulosonate biosynthesis; 3-deoxy-D-manno-octulosonate from D-ribulose 5-phosphate: step 2/3. The protein operates within bacterial outer membrane biogenesis; lipopolysaccharide biosynthesis. This is 2-dehydro-3-deoxyphosphooctonate aldolase from Shewanella sp. (strain MR-4).